A 167-amino-acid polypeptide reads, in one-letter code: Transmembrane protein 229B (167 aa).

The Cytoplasmic segment spans residues 1–14 (MASAEPLTALSRWY). Residues 15-35 (LYAIHGYFCEVMFTAAWEFVV) form a helical membrane-spanning segment. Residues 36 to 40 (NFNWK) are Extracellular-facing. Residues 41 to 61 (FPGVTSVWALFIYGTSILIVE) form a helical membrane-spanning segment. Residues 62–73 (RMYLRLRGRCPL) are Cytoplasmic-facing. A helical membrane pass occupies residues 74 to 94 (LVRCVIYTLWTYLWEFTTGFI). At 95–109 (LRQFNACPWDYSQFD) the chain is on the extracellular side. The helical transmembrane segment at 110-130 (FDFMGLITLEYAVPWFCGALI) threads the bilayer. Topologically, residues 131–167 (MEQFIIRNTLRLRFDKDAEPGEPASPPALANGHVKTD) are cytoplasmic. The tract at residues 148-167 (AEPGEPASPPALANGHVKTD) is disordered.

Belongs to the TMEM229 family.

It is found in the membrane. This chain is Transmembrane protein 229B (TMEM229B), found in Mus musculus (Mouse).